We begin with the raw amino-acid sequence, 433 residues long: Homogentisate 1,2-dioxygenase (433 aa).

The Proton acceptor role is filled by histidine 288. Fe cation contacts are provided by histidine 331 and glutamate 337. Residues tyrosine 346 and histidine 367 each contribute to the homogentisate site. Residue histidine 367 coordinates Fe cation.

Belongs to the homogentisate dioxygenase family. As to quaternary structure, hexamer; dimer of trimers. Fe cation serves as cofactor.

It carries out the reaction homogentisate + O2 = 4-maleylacetoacetate + H(+). It functions in the pathway amino-acid degradation; L-phenylalanine degradation; acetoacetate and fumarate from L-phenylalanine: step 4/6. In terms of biological role, involved in the catabolism of homogentisate (2,5-dihydroxyphenylacetate or 2,5-OH-PhAc), a central intermediate in the degradation of phenylalanine and tyrosine. Catalyzes the oxidative ring cleavage of the ar omatic ring of 2,5-dihydroxyphenylacetate to yield maleylacetoacetate. The polypeptide is Homogentisate 1,2-dioxygenase (Pseudomonas putida (strain ATCC 47054 / DSM 6125 / CFBP 8728 / NCIMB 11950 / KT2440)).